The primary structure comprises 281 residues: Putative outer membrane protein BBA52 (281 aa).

Positions 162–281 (KRISDNQSKL…FFDSLEDQFI (120 aa)) are disordered. Over residues 179–196 (NKSVGSKFSKNSRPSKSP) the composition is skewed to polar residues. The segment covering 219–249 (EFLDDPSQESDELEREYQDDELESEDPDDGE) has biased composition (acidic residues). The segment covering 250–262 (REYQDDRESRDDT) has biased composition (basic and acidic residues). The segment covering 263–281 (FNEDQSEDEFFDSLEDQFI) has biased composition (acidic residues).

The protein localises to the cell outer membrane. In Borreliella burgdorferi (strain ATCC 35210 / DSM 4680 / CIP 102532 / B31) (Borrelia burgdorferi), this protein is Putative outer membrane protein BBA52.